Consider the following 271-residue polypeptide: Ribosomal RNA small subunit methyltransferase A (271 aa).

Asn-19, Leu-21, Gly-46, Glu-67, Asp-92, and Asn-114 together coordinate S-adenosyl-L-methionine.

The protein belongs to the class I-like SAM-binding methyltransferase superfamily. rRNA adenine N(6)-methyltransferase family. RsmA subfamily.

It is found in the cytoplasm. It catalyses the reaction adenosine(1518)/adenosine(1519) in 16S rRNA + 4 S-adenosyl-L-methionine = N(6)-dimethyladenosine(1518)/N(6)-dimethyladenosine(1519) in 16S rRNA + 4 S-adenosyl-L-homocysteine + 4 H(+). Functionally, specifically dimethylates two adjacent adenosines (A1518 and A1519) in the loop of a conserved hairpin near the 3'-end of 16S rRNA in the 30S particle. May play a critical role in biogenesis of 30S subunits. This is Ribosomal RNA small subunit methyltransferase A from Aeromonas hydrophila subsp. hydrophila (strain ATCC 7966 / DSM 30187 / BCRC 13018 / CCUG 14551 / JCM 1027 / KCTC 2358 / NCIMB 9240 / NCTC 8049).